The chain runs to 88 residues: Beta-insect excitatory toxin LqhIT1b (88 aa).

A signal peptide spans 1–18 (MKFFLLFLVVLPIMGVLG). An LCN-type CS-alpha/beta domain is found at 20-83 (KNGYAVDSKG…ISDTTKKYCD (64 aa)). 4 disulfides stabilise this stretch: cysteine 34-cysteine 55, cysteine 40-cysteine 60, cysteine 44-cysteine 62, and cysteine 56-cysteine 82.

The protein belongs to the long (4 C-C) scorpion toxin superfamily. Sodium channel inhibitor family. Beta subfamily. Expressed by the venom gland.

The protein resides in the secreted. Its function is as follows. Excitatory insect toxins induce a spastic paralysis. They bind voltage-independently at site-4 of sodium channels (Nav) and shift the voltage of activation toward more negative potentials thereby affecting sodium channel activation and promoting spontaneous and repetitive firing. This Leiurus hebraeus (Hebrew deathstalker scorpion) protein is Beta-insect excitatory toxin LqhIT1b.